The sequence spans 200 residues: 3-isopropylmalate dehydratase small subunit (200 aa).

The protein belongs to the LeuD family. LeuD type 1 subfamily. Heterodimer of LeuC and LeuD.

The catalysed reaction is (2R,3S)-3-isopropylmalate = (2S)-2-isopropylmalate. It functions in the pathway amino-acid biosynthesis; L-leucine biosynthesis; L-leucine from 3-methyl-2-oxobutanoate: step 2/4. Catalyzes the isomerization between 2-isopropylmalate and 3-isopropylmalate, via the formation of 2-isopropylmaleate. This Actinobacillus pleuropneumoniae serotype 7 (strain AP76) protein is 3-isopropylmalate dehydratase small subunit.